We begin with the raw amino-acid sequence, 892 residues long: Bifunctional uridylyltransferase/uridylyl-removing enzyme (892 aa).

Positions 1–348 (MPNFTGNTRP…LVDAKVHVRP (348 aa)) are uridylyltransferase. The interval 349-710 (INERFQARNG…RIHNQEPGTM (362 aa)) is uridylyl-removing. The 123-residue stretch at 467–589 (VDEHTLFLIH…VGDERRLNHL (123 aa)) folds into the HD domain. 2 consecutive ACT domains span residues 711-786 (EVFI…LTQP) and 822-892 (VMEL…YLER).

Belongs to the GlnD family. Mg(2+) is required as a cofactor.

It catalyses the reaction [protein-PII]-L-tyrosine + UTP = [protein-PII]-uridylyl-L-tyrosine + diphosphate. It carries out the reaction [protein-PII]-uridylyl-L-tyrosine + H2O = [protein-PII]-L-tyrosine + UMP + H(+). Its activity is regulated as follows. Uridylyltransferase (UTase) activity is inhibited by glutamine, while glutamine activates uridylyl-removing (UR) activity. Functionally, modifies, by uridylylation and deuridylylation, the PII regulatory proteins (GlnB and homologs), in response to the nitrogen status of the cell that GlnD senses through the glutamine level. Under low glutamine levels, catalyzes the conversion of the PII proteins and UTP to PII-UMP and PPi, while under higher glutamine levels, GlnD hydrolyzes PII-UMP to PII and UMP (deuridylylation). Thus, controls uridylylation state and activity of the PII proteins, and plays an important role in the regulation of nitrogen assimilation and metabolism. The protein is Bifunctional uridylyltransferase/uridylyl-removing enzyme of Nitrosococcus oceani (strain ATCC 19707 / BCRC 17464 / JCM 30415 / NCIMB 11848 / C-107).